We begin with the raw amino-acid sequence, 191 residues long: Potassium-transporting ATPase KdpC subunit (191 aa).

Residues 10–30 (ITLVFCVFFSVFYILVLWLFA) traverse the membrane as a helical segment.

This sequence belongs to the KdpC family. The system is composed of three essential subunits: KdpA, KdpB and KdpC.

Its subcellular location is the cell inner membrane. Part of the high-affinity ATP-driven potassium transport (or Kdp) system, which catalyzes the hydrolysis of ATP coupled with the electrogenic transport of potassium into the cytoplasm. This subunit acts as a catalytic chaperone that increases the ATP-binding affinity of the ATP-hydrolyzing subunit KdpB by the formation of a transient KdpB/KdpC/ATP ternary complex. In Bacteroides fragilis (strain YCH46), this protein is Potassium-transporting ATPase KdpC subunit.